A 510-amino-acid chain; its full sequence is Beta-glucosidase 34 (510 aa).

The N-terminal stretch at 1 to 26 is a signal peptide; that stretch reads MGNGGRCMVEVVILLVLMAMSQGCDA. N-linked (GlcNAc...) asparagine glycosylation is present at Asn28. Gln52 contacts a beta-D-glucoside. An N-linked (GlcNAc...) asparagine glycan is attached at Asn120. Residues His153 and 198-199 each bind a beta-D-glucoside; that span reads NE. Glu199 acts as the Proton donor in catalysis. Residues Cys218 and Cys226 are joined by a disulfide bond. 2 N-linked (GlcNAc...) asparagine glycosylation sites follow: Asn279 and Asn331. Residue Tyr342 participates in a beta-D-glucoside binding. N-linked (GlcNAc...) asparagine glycosylation occurs at Asn360. Residues Glu415, Trp465, 472-473, and Phe481 contribute to the a beta-D-glucoside site; that span reads EW. Glu415 acts as the Nucleophile in catalysis.

The protein belongs to the glycosyl hydrolase 1 family.

It carries out the reaction Hydrolysis of terminal, non-reducing beta-D-glucosyl residues with release of beta-D-glucose.. The protein is Beta-glucosidase 34 (BGLU34) of Oryza sativa subsp. japonica (Rice).